We begin with the raw amino-acid sequence, 387 residues long: Phosphoglycerate kinase (387 aa).

Substrate contacts are provided by residues 21–23, Arg-36, 59–62, Arg-113, and Arg-146; these read DLN and HLGR. ATP is bound by residues Lys-197, Glu-314, and 340–343; that span reads GGDT.

The protein belongs to the phosphoglycerate kinase family. In terms of assembly, monomer.

Its subcellular location is the cytoplasm. The catalysed reaction is (2R)-3-phosphoglycerate + ATP = (2R)-3-phospho-glyceroyl phosphate + ADP. The protein operates within carbohydrate degradation; glycolysis; pyruvate from D-glyceraldehyde 3-phosphate: step 2/5. This is Phosphoglycerate kinase from Pseudomonas aeruginosa (strain ATCC 15692 / DSM 22644 / CIP 104116 / JCM 14847 / LMG 12228 / 1C / PRS 101 / PAO1).